Here is an 874-residue protein sequence, read N- to C-terminus: Alanine--tRNA ligase (874 aa).

Zn(2+) contacts are provided by H564, H568, C665, and H669.

Belongs to the class-II aminoacyl-tRNA synthetase family. The cofactor is Zn(2+).

It is found in the cytoplasm. The catalysed reaction is tRNA(Ala) + L-alanine + ATP = L-alanyl-tRNA(Ala) + AMP + diphosphate. Functionally, catalyzes the attachment of alanine to tRNA(Ala) in a two-step reaction: alanine is first activated by ATP to form Ala-AMP and then transferred to the acceptor end of tRNA(Ala). Also edits incorrectly charged Ser-tRNA(Ala) and Gly-tRNA(Ala) via its editing domain. The sequence is that of Alanine--tRNA ligase from Burkholderia vietnamiensis (strain G4 / LMG 22486) (Burkholderia cepacia (strain R1808)).